The primary structure comprises 295 residues: Protein FAM221A (295 aa).

The interval 244-295 (SEPPGIDKQVSSMRLSEEDDMAYFERRYQERLRKEKEHKRQKNSKPPTTQRP) is disordered. The span at 266–278 (YFERRYQERLRKE) shows a compositional bias: basic and acidic residues.

This sequence belongs to the FAM221 family.

The polypeptide is Protein FAM221A (fam221a) (Xenopus laevis (African clawed frog)).